The primary structure comprises 627 residues: Phosphomethylpyrimidine synthase (627 aa).

The segment at 1–21 (MSVQSNKNLSESAQVDQQSIQ) is disordered. Residues Asn231, Met260, Tyr289, His325, 345 to 347 (SRG), 386 to 389 (DGLR), and Glu425 each bind substrate. His429 lines the Zn(2+) pocket. Tyr452 contacts substrate. His493 contacts Zn(2+). [4Fe-4S] cluster-binding residues include Cys573, Cys576, and Cys581.

This sequence belongs to the ThiC family. Homodimer. Requires [4Fe-4S] cluster as cofactor.

It catalyses the reaction 5-amino-1-(5-phospho-beta-D-ribosyl)imidazole + S-adenosyl-L-methionine = 4-amino-2-methyl-5-(phosphooxymethyl)pyrimidine + CO + 5'-deoxyadenosine + formate + L-methionine + 3 H(+). It functions in the pathway cofactor biosynthesis; thiamine diphosphate biosynthesis. Catalyzes the synthesis of the hydroxymethylpyrimidine phosphate (HMP-P) moiety of thiamine from aminoimidazole ribotide (AIR) in a radical S-adenosyl-L-methionine (SAM)-dependent reaction. The protein is Phosphomethylpyrimidine synthase of Stutzerimonas stutzeri (strain A1501) (Pseudomonas stutzeri).